Reading from the N-terminus, the 773-residue chain is Photosystem I P700 chlorophyll a apoprotein A1 (773 aa).

Residues 1–27 (MTISPPERGEKAKGAAPTPYDQPVDRD) form a disordered region. 8 consecutive transmembrane segments (helical) span residues 80-103 (IFSA…FHGA), 166-189 (LMAL…YHYH), 205-229 (LQHH…HIGA), 315-333 (ISHH…GHMW), 375-398 (WHGQ…HHMY), 414-440 (LGLF…IAMI), 462-484 (AIIS…LYIH), and 564-582 (LMIH…LILL). Positions 606 and 615 each coordinate [4Fe-4S] cluster. A run of 2 helical transmembrane segments spans residues 622–643 (HVFL…HFSW) and 687–709 (ISMY…MFLF). A divinylchlorophyll a'-binding site is contributed by His-698. Positions 706 and 714 each coordinate divinyl chlorophyll a. Trp-715 lines the phylloquinone pocket. Residues 747–767 (AVGVAHFLLGGIATTWAFFHA) form a helical membrane-spanning segment.

It belongs to the PsaA/PsaB family. As to quaternary structure, the PsaA/B heterodimer binds the P700 divinyl chlorophyll special pair and subsequent electron acceptors. PSI consists of a core antenna complex that captures photons, and an electron transfer chain that converts photonic excitation into a charge separation. The cyanobacterial PSI reaction center is composed of one copy each of PsaA,B,C,D,E,F,I,J,K,L,M and X, and forms trimeric complexes. The cofactor is PSI electron transfer chain: 5 divinyl chlorophyll a, 1 divinyl chlorophyll a', 2 phylloquinones and 3 4Fe-4S clusters. PSI core antenna: 90 divinyl chlorophyll a, 22 carotenoids, 3 phospholipids and 1 galactolipid. P700 is a divinyl chlorophyll a/divinyl chlorophyll a' dimer, A0 is one or more divinylchlorophyll a, A1 is one or both phylloquinones and FX is a shared 4Fe-4S iron-sulfur center..

It localises to the cellular thylakoid membrane. It carries out the reaction reduced [plastocyanin] + hnu + oxidized [2Fe-2S]-[ferredoxin] = oxidized [plastocyanin] + reduced [2Fe-2S]-[ferredoxin]. In terms of biological role, psaA and PsaB bind P700, the primary electron donor of photosystem I (PSI), as well as the electron acceptors A0, A1 and FX. PSI is a plastocyanin/cytochrome c6-ferredoxin oxidoreductase, converting photonic excitation into a charge separation, which transfers an electron from the donor P700 chlorophyll pair to the spectroscopically characterized acceptors A0, A1, FX, FA and FB in turn. Oxidized P700 is reduced on the lumenal side of the thylakoid membrane by plastocyanin or cytochrome c6. The polypeptide is Photosystem I P700 chlorophyll a apoprotein A1 (Prochlorococcus marinus (strain SARG / CCMP1375 / SS120)).